The sequence spans 179 residues: Large ribosomal subunit protein uL10 (179 aa).

The protein belongs to the universal ribosomal protein uL10 family. In terms of assembly, part of the ribosomal stalk of the 50S ribosomal subunit. The N-terminus interacts with L11 and the large rRNA to form the base of the stalk. The C-terminus forms an elongated spine to which L12 dimers bind in a sequential fashion forming a multimeric L10(L12)X complex.

Its function is as follows. Forms part of the ribosomal stalk, playing a central role in the interaction of the ribosome with GTP-bound translation factors. The polypeptide is Large ribosomal subunit protein uL10 (Polynucleobacter necessarius subsp. necessarius (strain STIR1)).